The following is a 584-amino-acid chain: Poly(A) RNA polymerase protein 2 (584 aa).

Residues 1–11 (MGAKSVTASSS) show a composition bias toward polar residues. Disordered regions lie at residues 1–63 (MGAK…LPKD) and 81–147 (EGFD…QELE). Positions 12-35 (KKIKNRHNGKVKKSKKIKKVRKPQ) are enriched in basic residues. The span at 53–63 (NEQETNKLPKD) shows a compositional bias: basic and acidic residues. A compositionally biased stretch (acidic residues) spans 130-139 (SEDEQAEQEE). Positions 236 and 238 each coordinate Mg(2+). 4 residues coordinate ATP: Gly-301, Lys-326, Asn-431, and Arg-435. The PAP-associated domain occupies 371–431 (NLGVLLIEFF…AIQDPGDESN (61 aa)). The tract at residues 525 to 584 (TSTATATTTDDDYEITNPPAKKAKIEEKPESEPAKRNSGETYITVSSEDDDEDGYNPYTL) is disordered. The span at 547–562 (AKIEEKPESEPAKRNS) shows a compositional bias: basic and acidic residues.

Belongs to the DNA polymerase type-B-like family. As to quaternary structure, component of the TRAMP complex (also called TRF4 complex) composed of at least HUL4, MTR4, PAP2/TRF4 and either AIR1 or AIR2. Interacts with NOP53 and POL2. Interacts directly with AIR2. Requires Mg(2+) as cofactor. It depends on Mn(2+) as a cofactor.

It localises to the nucleus. The catalysed reaction is RNA(n) + ATP = RNA(n)-3'-adenine ribonucleotide + diphosphate. In terms of biological role, catalytic subunit of the TRAMP complex which has a poly(A) RNA polymerase activity and is involved in a post-transcriptional quality control mechanism limiting inappropriate expression of genetic information. Polyadenylation is required for the degradative activity of the exosome on several of its nuclear RNA substrates like cryptic transcripts generated by RNA polymerase II and III, or hypomethylated pre-tRNAi-Met. Polyadenylates RNA processing and degradation intermediates of snRNAs, snoRNAs and mRNAs that accumulate in strains lacking a functional exosome. TRF4 is also required for proper nuclear division in mitosis, DNA damage repair and sister chromatid cohesion. Involved in the regulation of histone mRNA levels. May mediate mitotic chromosome condensation. The protein is Poly(A) RNA polymerase protein 2 (PAP2) of Saccharomyces cerevisiae (strain ATCC 204508 / S288c) (Baker's yeast).